Consider the following 246-residue polypeptide: Phosphonates import ATP-binding protein PhnC (246 aa).

In terms of domain architecture, ABC transporter spans 2-246 (IKFENVSKIY…ILDEVYRKEA (245 aa)). 35–42 (GTSGAGKS) lines the ATP pocket.

It belongs to the ABC transporter superfamily. Phosphonates importer (TC 3.A.1.9.1) family. In terms of assembly, the complex is composed of two ATP-binding proteins (PhnC), two transmembrane proteins (PhnE) and a solute-binding protein (PhnD).

It is found in the cell membrane. The enzyme catalyses phosphonate(out) + ATP + H2O = phosphonate(in) + ADP + phosphate + H(+). Part of the ABC transporter complex PhnCDE involved in phosphonates import. Responsible for energy coupling to the transport system. In Lactococcus lactis subsp. lactis (strain IL1403) (Streptococcus lactis), this protein is Phosphonates import ATP-binding protein PhnC.